The chain runs to 267 residues: NAD(P)H-hydrate epimerase (267 aa).

Residues 27–242 form the YjeF N-terminal domain; sequence AQKIDEDLMS…DLEAKFDLQL (216 aa). Position 78–82 (78–82) interacts with (6S)-NADPHX; sequence NQGGD. The K(+) site is built by Gln-79 and Asp-142. (6S)-NADPHX-binding positions include 146 to 152 and Asp-185; that span reads GFNFKGD. Ser-188 contacts K(+).

It belongs to the NnrE/AIBP family. The cofactor is K(+).

It localises to the cytoplasm. The protein localises to the mitochondrion. It carries out the reaction (6R)-NADHX = (6S)-NADHX. The catalysed reaction is (6R)-NADPHX = (6S)-NADPHX. In terms of biological role, catalyzes the epimerization of the S- and R-forms of NAD(P)HX, a damaged form of NAD(P)H that is a result of enzymatic or heat-dependent hydration. This is a prerequisite for the S-specific NAD(P)H-hydrate dehydratase to allow the repair of both epimers of NAD(P)HX. This Mycosarcoma maydis (Corn smut fungus) protein is NAD(P)H-hydrate epimerase.